Reading from the N-terminus, the 142-residue chain is Large ribosomal subunit protein uL13 (142 aa).

It belongs to the universal ribosomal protein uL13 family. Part of the 50S ribosomal subunit.

Its function is as follows. This protein is one of the early assembly proteins of the 50S ribosomal subunit, although it is not seen to bind rRNA by itself. It is important during the early stages of 50S assembly. The polypeptide is Large ribosomal subunit protein uL13 (Syntrophus aciditrophicus (strain SB)).